The sequence spans 239 residues: Ribonuclease PH (239 aa).

Phosphate contacts are provided by residues Arg87 and 125-127; that span reads GTR.

It belongs to the RNase PH family. As to quaternary structure, homohexameric ring arranged as a trimer of dimers.

It catalyses the reaction tRNA(n+1) + phosphate = tRNA(n) + a ribonucleoside 5'-diphosphate. Its function is as follows. Phosphorolytic 3'-5' exoribonuclease that plays an important role in tRNA 3'-end maturation. Removes nucleotide residues following the 3'-CCA terminus of tRNAs; can also add nucleotides to the ends of RNA molecules by using nucleoside diphosphates as substrates, but this may not be physiologically important. Probably plays a role in initiation of 16S rRNA degradation (leading to ribosome degradation) during starvation. The sequence is that of Ribonuclease PH from Cyanothece sp. (strain PCC 7425 / ATCC 29141).